A 125-amino-acid chain; its full sequence is Small ribosomal subunit protein eS8 (125 aa).

The protein belongs to the eukaryotic ribosomal protein eS8 family. As to quaternary structure, part of the 30S ribosomal subunit.

The chain is Small ribosomal subunit protein eS8 from Methanocorpusculum labreanum (strain ATCC 43576 / DSM 4855 / Z).